Consider the following 162-residue polypeptide: MTSIPISVQGYKALEEELARLKSERPEIIQAIKEAREEGDLRENAGYDAARERQGMAEARIKYIESRMALYQVIDLDTLSGDKVIFGATVDLEDVDSGEAKTYTILGPDEADPSKGSISFLSPVGQALLGREEGDEVSVEIPRGRVTYEIIGVSFKGSKNLG.

Residues 9–38 (QGYKALEEELARLKSERPEIIQAIKEAREE) are a coiled coil.

This sequence belongs to the GreA/GreB family.

Its function is as follows. Necessary for efficient RNA polymerase transcription elongation past template-encoded arresting sites. The arresting sites in DNA have the property of trapping a certain fraction of elongating RNA polymerases that pass through, resulting in locked ternary complexes. Cleavage of the nascent transcript by cleavage factors such as GreA or GreB allows the resumption of elongation from the new 3'terminus. GreA releases sequences of 2 to 3 nucleotides. This Desulfovibrio desulfuricans (strain ATCC 27774 / DSM 6949 / MB) protein is Transcription elongation factor GreA.